The primary structure comprises 54 residues: RKHKNLKPFQCDKCSYSCVNKSMLNSHRKFHSSVYQYRCADCDYATKYCHSFKL.

3 consecutive C2H2-type zinc fingers follow at residues 1–3 (RKH), 9–31 (FQCD…RKFH), and 37–54 (YRCA…SFKL).

The protein belongs to the hunchback C2H2-type zinc-finger protein family.

Its subcellular location is the nucleus. In terms of biological role, gap class segmentation protein that controls development of head structures. In Calliphora vicina (Blue blowfly), this protein is Protein hunchback (hb).